The following is a 136-amino-acid chain: MSKLNKSIIAEFESAQITRQVPQFSQGDTIVVNVKVKEGNRERLQAYEGVVIATKNAGLNSAFTVRKISHGYGVERVFQTHSPIIESIEIKRRGKVRAAKLYYLRGLEGKAARIKEDLAATAHEKLARKTVTAKAG.

This sequence belongs to the bacterial ribosomal protein bL19 family.

In terms of biological role, this protein is located at the 30S-50S ribosomal subunit interface and may play a role in the structure and function of the aminoacyl-tRNA binding site. The chain is Large ribosomal subunit protein bL19 from Xylella fastidiosa (strain M23).